The chain runs to 500 residues: TBC1 domain family member 10A (500 aa).

Positions 1 to 10 (MAKSSRENGP) are enriched in basic and acidic residues. Positions 1-45 (MAKSSRENGPREPAAGGSLSGTRESLAQGPDAATADELSSLGSDS) are disordered. Ser-39, Ser-40, and Ser-45 each carry phosphoserine. A Rab-GAP TBC domain is found at 111-299 (GIPPSLRGRA…RVWDMFFCEG (189 aa)). 2 disordered regions span residues 396 to 415 (AEPG…LPPD) and 420 to 500 (SSKA…DTYL). Ser-407 carries the post-translational modification Phosphoserine. The span at 438–453 (TSAQLDKSPGLSQATV) shows a compositional bias: polar residues. Phosphothreonine is present on Thr-477. A binding to the PDZ domain of EBP50 region spans residues 497 to 500 (DTYL).

Binds to the first PDZ domain of NHERF1 and NHERF2. As to expression, expressed in most tissues, except for skeletal muscle.

The protein localises to the cell projection. Its subcellular location is the microvillus. In terms of biological role, GTPase-activating protein (GAP) specific for RAB27A and RAB35. Does not show GAP activity for RAB2A, RAB3A and RAB4A. This Mus musculus (Mouse) protein is TBC1 domain family member 10A (Tbc1d10a).